Consider the following 251-residue polypeptide: MLRLGVNIDHVATIRNARGSSYPEPVRAAELALAAGADGITAHLREDRRHISDADIALLTDLCLKRGKPLNFEMAVTDEMVGIALQARPHAACLVPERREEVTTEGGLDVVKGFDKIAAATARLRTAGARVSLFIEADPAQIQASADAGAQVVELHTGAYCDAAREGHADRAAAILERLKTGAELAASLGLEVHAGHGIDYATVKPIAAIPQIAELNIGHFLIGEAIFVGLPQAMQRMRVLMDAARLEVAA.

3-amino-2-oxopropyl phosphate is bound at residue Asn-7. 1-deoxy-D-xylulose 5-phosphate is bound at residue 9–10 (DH). A 3-amino-2-oxopropyl phosphate-binding site is contributed by Arg-18. Catalysis depends on His-43, which acts as the Proton acceptor. Arg-45 and His-50 together coordinate 1-deoxy-D-xylulose 5-phosphate. The Proton acceptor role is filled by Glu-73. Thr-103 is a binding site for 1-deoxy-D-xylulose 5-phosphate. The active-site Proton donor is His-197. Residues Gly-198 and 219–220 (GH) each bind 3-amino-2-oxopropyl phosphate.

The protein belongs to the PNP synthase family. Homooctamer; tetramer of dimers.

It localises to the cytoplasm. It catalyses the reaction 3-amino-2-oxopropyl phosphate + 1-deoxy-D-xylulose 5-phosphate = pyridoxine 5'-phosphate + phosphate + 2 H2O + H(+). The protein operates within cofactor biosynthesis; pyridoxine 5'-phosphate biosynthesis; pyridoxine 5'-phosphate from D-erythrose 4-phosphate: step 5/5. Catalyzes the complicated ring closure reaction between the two acyclic compounds 1-deoxy-D-xylulose-5-phosphate (DXP) and 3-amino-2-oxopropyl phosphate (1-amino-acetone-3-phosphate or AAP) to form pyridoxine 5'-phosphate (PNP) and inorganic phosphate. This Caulobacter sp. (strain K31) protein is Pyridoxine 5'-phosphate synthase.